We begin with the raw amino-acid sequence, 422 residues long: Gamma-glutamyl phosphate reductase (422 aa).

This sequence belongs to the gamma-glutamyl phosphate reductase family.

It is found in the cytoplasm. It catalyses the reaction L-glutamate 5-semialdehyde + phosphate + NADP(+) = L-glutamyl 5-phosphate + NADPH + H(+). Its pathway is amino-acid biosynthesis; L-proline biosynthesis; L-glutamate 5-semialdehyde from L-glutamate: step 2/2. Catalyzes the NADPH-dependent reduction of L-glutamate 5-phosphate into L-glutamate 5-semialdehyde and phosphate. The product spontaneously undergoes cyclization to form 1-pyrroline-5-carboxylate. In Saccharophagus degradans (strain 2-40 / ATCC 43961 / DSM 17024), this protein is Gamma-glutamyl phosphate reductase.